The following is a 310-amino-acid chain: Phosphoribosylaminoimidazole-succinocarboxamide synthase (310 aa).

The protein belongs to the SAICAR synthetase family.

It carries out the reaction 5-amino-1-(5-phospho-D-ribosyl)imidazole-4-carboxylate + L-aspartate + ATP = (2S)-2-[5-amino-1-(5-phospho-beta-D-ribosyl)imidazole-4-carboxamido]succinate + ADP + phosphate + 2 H(+). The protein operates within purine metabolism; IMP biosynthesis via de novo pathway; 5-amino-1-(5-phospho-D-ribosyl)imidazole-4-carboxamide from 5-amino-1-(5-phospho-D-ribosyl)imidazole-4-carboxylate: step 1/2. This is Phosphoribosylaminoimidazole-succinocarboxamide synthase from Cytophaga hutchinsonii (strain ATCC 33406 / DSM 1761 / CIP 103989 / NBRC 15051 / NCIMB 9469 / D465).